Here is a 480-residue protein sequence, read N- to C-terminus: MDQEESHVISIFETFGAYFINIFYNFLYKNALYKKHSIVMEYQYQVKGYILGVKQNKKLYEKMLDSFYKYFCNITQINSKTLSFSNFVSTIVDSFLPKEYSQSISLEKKDSILELLLCDYISNLGTFITTEKMLPFIVKNRKENYHRITKEMQDYSLTFLLKKRMELYNKFLRKQAYVEPKTELEETYTRLSSYNRSLLYQIEELTSEKKSLLAELSTLRKKYEKRQSEYRRLVQLLYQQIQRSSSSKNSYPLTKFIETLPSEHFSNEDYQKEAPRDQKQVETELLKQQEELLASQELTSKSPSNYPVPQSRTIVSKPSDNYPVPQSRSSKIDFDNSLQNQELNVKNGFSGKTILELNQDNPEIEEDILEFNQDNPEIEEDILEFNQDNPEIEEDILKFNQDNPEIEEDILKLNQDNPEIEEEVILEKENHKEDEPIVQNPFLENFWKPEQKTFNQSGLFEESSDFSNDWSGGDVTLNFS.

A helical membrane pass occupies residues 7–28 (HVISIFETFGAYFINIFYNFLY). Asn-73 and Asn-195 each carry an N-linked (GlcNAc...) asparagine; by host glycan. Positions 195–235 (NRSLLYQIEELTSEKKSLLAELSTLRKKYEKRQSEYRRLVQ) form a coiled coil. Residues 297 to 332 (ELTSKSPSNYPVPQSRTIVSKPSDNYPVPQSRSSKI) are disordered. Residues 301-329 (KSPSNYPVPQSRTIVSKPSDNYPVPQSRS) show a composition bias toward polar residues. Residue Asn-455 is glycosylated (N-linked (GlcNAc...) asparagine; by host).

The protein belongs to the asfivirus B475L family.

It localises to the host membrane. This is an uncharacterized protein from African swine fever virus (isolate Pig/Kenya/KEN-50/1950) (ASFV).